Here is a 407-residue protein sequence, read N- to C-terminus: Protein-glutamine gamma-glutamyltransferase (407 aa).

An N-terminal signal peptide occupies residues 1-31; sequence MRIRRRALVFATMSAVLCTAGFMPSAGEAAA. The propeptide occupies 32 to 76; it reads DNGAGEETKSYAETYRLTADDVANINALNESAPAASSAGPSFRAP. The span at 62–72 shows a compositional bias: low complexity; it reads SAPAASSAGPS. The disordered stretch occupies residues 62 to 98; it reads SAPAASSAGPSFRAPDSDDRVTPPAEPLDRMPDPYRP. The span at 76–94 shows a compositional bias: basic and acidic residues; that stretch reads PDSDDRVTPPAEPLDRMPD. Cys140 is an active-site residue. Positions 282 to 322 are disordered; the sequence is QDRSSSADKRKYGDPDAFRPAPGTGLVDMSRDRNIPRSPTS. Positions 286–298 are enriched in basic and acidic residues; sequence SSADKRKYGDPDA. Residues Asp331 and His350 contribute to the active site.

It belongs to the bacterial TGase family.

It carries out the reaction L-glutaminyl-[protein] + L-lysyl-[protein] = [protein]-L-lysyl-N(6)-5-L-glutamyl-[protein] + NH4(+). Catalyzes the cross-linking of proteins and the conjugation of polyamines to proteins. The protein is Protein-glutamine gamma-glutamyltransferase of Streptomyces mobaraensis (Streptoverticillium mobaraense).